A 225-amino-acid chain; its full sequence is Small ribosomal subunit protein uS2 (225 aa).

The segment covering 1–14 (MAEAKPAPEKEAAA) has biased composition (basic and acidic residues). The tract at residues 1 to 33 (MAEAKPAPEKEAAAKTESVPVETEGEGPSVKEG) is disordered.

It belongs to the universal ribosomal protein uS2 family.

The sequence is that of Small ribosomal subunit protein uS2 from Methanosarcina barkeri (strain Fusaro / DSM 804).